A 384-amino-acid chain; its full sequence is uncharacterized protein (384 aa).

This is an uncharacterized protein from Acanthamoeba polyphaga (Amoeba).